A 208-amino-acid polypeptide reads, in one-letter code: Uracil phosphoribosyltransferase (208 aa).

Residues R78, R103, and 130–138 (DPMLATGGS) each bind 5-phospho-alpha-D-ribose 1-diphosphate. Residues I193 and 198-200 (GDA) contribute to the uracil site. D199 contacts 5-phospho-alpha-D-ribose 1-diphosphate.

Belongs to the UPRTase family. The cofactor is Mg(2+).

The enzyme catalyses UMP + diphosphate = 5-phospho-alpha-D-ribose 1-diphosphate + uracil. The protein operates within pyrimidine metabolism; UMP biosynthesis via salvage pathway; UMP from uracil: step 1/1. Allosterically activated by GTP. Catalyzes the conversion of uracil and 5-phospho-alpha-D-ribose 1-diphosphate (PRPP) to UMP and diphosphate. The sequence is that of Uracil phosphoribosyltransferase from Glaesserella parasuis serovar 5 (strain SH0165) (Haemophilus parasuis).